The chain runs to 514 residues: Na(+)/H(+) antiporter NhaB (514 aa).

The next 12 membrane-spanning stretches (helical) occupy residues 23-43 (LALL…PFVA), 63-83 (PLLP…TSAA), 97-117 (LLLM…LFIF), 120-140 (LLLS…AAAF), 144-164 (FLDA…FYGI), 202-222 (LMMH…VGEP), 238-258 (FFLR…LTCM), 303-323 (AVIG…VGLI), 357-377 (LTVF…APII), 391-411 (LFYL…VGTI), 447-467 (ATPN…APLI), and 475-495 (VWMA…CVEF).

Belongs to the NhaB Na(+)/H(+) (TC 2.A.34) antiporter family.

It localises to the cell inner membrane. It catalyses the reaction 2 Na(+)(in) + 3 H(+)(out) = 2 Na(+)(out) + 3 H(+)(in). In terms of biological role, na(+)/H(+) antiporter that extrudes sodium in exchange for external protons. The polypeptide is Na(+)/H(+) antiporter NhaB (Salmonella paratyphi A (strain ATCC 9150 / SARB42)).